A 485-amino-acid polypeptide reads, in one-letter code: MSIRYESVENLLTLIKDKKIKPSDVVKDIYDAIEETDPTIKSFLALDKENAIKKAQELDELQAKDQMDGKLFGIPMGIKDNIITNGLETTCASKMLEGFVPIYESTVMEKLHNENAVLIGKLNMDEFAMGGSTETSISKKTVNPFDHKAVPGGSSGGSAAAVAAGLVPFSLGSDTGGSIRQPAAYCGVVGMKPTYGRVSRFGLVAFASSLDQIGPLTRNVKDNAIVLEAISGADANDSTSAPVDDVDFTSEIGKDIKGLKVALPKEYLGEGVADDVKEAVQNAVETLKSLGAVVEEVSLPNTKFGIPSYYVIASSEASSNLSRFDGIRYGYHSKEAHSLEELYKMSRSEGFGKEVKRRIFLGTFALSSGYYDAYYKKSQKVRTLIKNDFDKVFENYDVVVGPTAPTTAFNLGEEIDDPLTMYANDLLTTPVNLAGLPGISVPCGQSNGRPIGLQFIGKPFDEKTLYRVAYQYETQYNLHDVYEKL.

Active-site charge relay system residues include K79 and S154. S178 serves as the catalytic Acyl-ester intermediate.

It belongs to the amidase family. GatA subfamily. Heterotrimer of A, B and C subunits.

The catalysed reaction is L-glutamyl-tRNA(Gln) + L-glutamine + ATP + H2O = L-glutaminyl-tRNA(Gln) + L-glutamate + ADP + phosphate + H(+). Allows the formation of correctly charged Gln-tRNA(Gln) through the transamidation of misacylated Glu-tRNA(Gln) in organisms which lack glutaminyl-tRNA synthetase. The reaction takes place in the presence of glutamine and ATP through an activated gamma-phospho-Glu-tRNA(Gln). This is Glutamyl-tRNA(Gln) amidotransferase subunit A from Staphylococcus aureus.